Here is a 214-residue protein sequence, read N- to C-terminus: Adenylate kinase (214 aa).

10 to 15 contributes to the ATP binding site; it reads GAGKGT. The tract at residues 30-59 is NMP; it reads STGDMFRDHKARGTEIGKQVQAIMDGGGLV. Residues Thr-31, Arg-36, 57 to 59, 85 to 88, and Gln-92 contribute to the AMP site; these read GLV and GYPR. The interval 126–163 is LID; sequence GRRSCPRCGAVYHVSQNPPRRAGYCDRDDAELVQREDD. Arg-127 provides a ligand contact to ATP. Zn(2+) contacts are provided by Cys-130 and Cys-133. 136–137 is an ATP binding site; that stretch reads VY. Zn(2+)-binding residues include Cys-150 and Asp-153. Residues Arg-160 and Arg-171 each contribute to the AMP site. Gly-199 contacts ATP.

It belongs to the adenylate kinase family. In terms of assembly, monomer.

The protein localises to the cytoplasm. It carries out the reaction AMP + ATP = 2 ADP. Its pathway is purine metabolism; AMP biosynthesis via salvage pathway; AMP from ADP: step 1/1. Its function is as follows. Catalyzes the reversible transfer of the terminal phosphate group between ATP and AMP. Plays an important role in cellular energy homeostasis and in adenine nucleotide metabolism. The protein is Adenylate kinase of Anaeromyxobacter dehalogenans (strain 2CP-C).